We begin with the raw amino-acid sequence, 209 residues long: uncharacterized protein (209 aa).

Over residues 1–15 (MHRIDTKTAQKDKFG) the composition is skewed to basic and acidic residues. A disordered region spans residues 1 to 34 (MHRIDTKTAQKDKFGAGKNGFTRGNPQTGTPATD). Positions 22–31 (TRGNPQTGTP) are enriched in polar residues.

This sequence to E.coli YfdL and M.jannaschii MJ0347.

This is an uncharacterized protein from Escherichia coli (strain K12).